The sequence spans 2108 residues: Mucin-5B (2108 aa).

The N-terminal stretch at 1-21 (MEIKKERSFWIFCLIWSFCKG) is a signal peptide. The 168-residue stretch at 36–203 (SECTTWGNFH…KVEDPSEKCP (168 aa)) folds into the VWFD 1 domain. 2 disulfides stabilise this stretch: cysteine 38/cysteine 166 and cysteine 60/cysteine 202. Residues 196–219 (EDPSEKCPDVRPDDHTGRHPTEDD) form a disordered region. Positions 304-360 (CPSNMEYMECGNSCADTCADPERSKICKAPCTDGCFCPPGTILDDLGGKKCVPRDSC) constitute a TIL 1 domain. N-linked (GlcNAc...) (complex) asparagine glycosylation is present at asparagine 381. A VWFD 2 domain is found at 398 to 570 (GSCSIDGGFH…NSWKTRASCF (173 aa)). 3 cysteine pairs are disulfide-bonded: cysteine 400–cysteine 534, cysteine 422–cysteine 569, and cysteine 443–cysteine 451. Residues asparagine 528, asparagine 599, asparagine 680, and asparagine 772 are each glycosylated (N-linked (GlcNAc...) (complex) asparagine). In terms of domain architecture, TIL 2 spans 666-723 (CPETMVYNYSVKYCNQSCRSLDEPDPLCKVQIAPMEGCGCPEGTYLNDEEECVTPDDC). Residues 782-825 (GSECQKSCKTQDMHCYVTECVSGCMCPDGLVLDGSGGCIPKDQC) form the TIL 3 domain. Positions 825–897 (CPCVHGGHFY…DYILAQDFCP (73 aa)) constitute a VWFC 1 domain. Asparagine 855 carries an N-linked (GlcNAc...) (complex) asparagine glycan. In terms of domain architecture, VWFD 3 spans 863-1033 (GTCTVYGNGH…NSWKITSTCS (171 aa)). Disulfide bonds link cysteine 865/cysteine 997, cysteine 887/cysteine 1032, cysteine 896/cysteine 994, and cysteine 914/cysteine 921. Residues asparagine 1036, asparagine 1219, asparagine 1371, and asparagine 1452 are each glycosylated (N-linked (GlcNAc...) (complex) asparagine). Residues 1429-1613 (CICSGWGNEH…APVSTNRYCN (185 aa)) enclose the VWFD 4 domain. Intrachain disulfides connect cysteine 1431–cysteine 1573, cysteine 1453–cysteine 1612, and cysteine 1477–cysteine 1485. N-linked (GlcNAc...) (complex) asparagine glycans are attached at residues asparagine 1567, asparagine 1639, asparagine 1792, asparagine 1807, and asparagine 1841. A VWFC 2 domain is found at 1761 to 1832 (CGCTAQDGSV…DPCCTETVCE (72 aa)). The region spanning 1870–1937 (GVCVSEGVEF…KEGQCCSQCQ (68 aa)) is the VWFC 3 domain. N-linked (GlcNAc...) (complex) asparagine glycosylation occurs at asparagine 1964. 4 cysteine pairs are disulfide-bonded: cysteine 2010–cysteine 2066, cysteine 2031–cysteine 2080, cysteine 2042–cysteine 2096, and cysteine 2046–cysteine 2098. The CTCK domain occupies 2010 to 2104 (CIDLPHKCKR…ECGCVETKCP (95 aa)).

Homomultimer; disulfide-linked. The N- and C-terminus mediate their assembly into higher order structures to form filaments. The CTCK domains of two polypeptides associate in the endoplasmic reticulum to generate intermolecularly disulfide-bonded dimers. These dimers progress to the Golgi apparatus, which is a more acidic environment than the endoplasmic reticulum. Under acidic conditions, the N-termini form non-covalent intermolecular interactions that juxtapose assemblies from different CTCK-linked dimers to produce long, disulfide-linked polymers that remain highly compact until secretion. In terms of processing, N-glycosylated. Complex glycosylation with bisecting N-acetylglucosamine. Contains mainly N-acetylglucosamine (3.1-8.5%), mannose (2.9-4.6%), a small amount of galactose (1.1-4.35) and sialic acid (0.3-1.3%). Most abundant glycan is composed of a GlcNAc(2)Man(3) core, a bisecting GlcNAc and another 3 GlcNAc antannae located on the mannoses of the core. Site Asn-1639 exists both in glycosylated and non-glycosylated forms.

It is found in the secreted. Ovomucin, the glycoprotein responsible for the gel properties of egg white, is composed for 2 subunits, alpha-ovomucin/MUC5B and beta-ovomucin/MUC6. The protein is Mucin-5B (MUC5B) of Gallus gallus (Chicken).